A 285-amino-acid polypeptide reads, in one-letter code: Putative cysteine-rich repeat secretory protein 14 (285 aa).

An N-terminal signal peptide occupies residues 1-30 (MSSFCLSKHLILVPILVMMAQLLLIRNVLS). Gnk2-homologous domains are found at residues 37–143 (YLYH…SIST) and 161–273 (RPNA…RYPF).

The protein belongs to the cysteine-rich repeat secretory protein family.

The protein localises to the secreted. The protein is Putative cysteine-rich repeat secretory protein 14 (CRRSP14) of Arabidopsis thaliana (Mouse-ear cress).